The chain runs to 300 residues: Tyrosine phosphatase-like protein J1 (300 aa).

The 268-residue stretch at 27 to 294 folds into the Tyrosine-protein phosphatase domain; sequence LKREHEHIMQ…IFCYFTVLQF (268 aa).

Belongs to the protein-tyrosine phosphatase family.

This Microplitis demolitor (Parasitoid wasp) protein is Tyrosine phosphatase-like protein J1 (J1).